Reading from the N-terminus, the 438-residue chain is Alkylcitrate synthase tstJ (438 aa).

Active-site residues include His-309 and Asp-365.

It belongs to the citrate synthase family.

The enzyme catalyses (2E,10E)-dode-2,10-dicenoyl-CoA + oxaloacetate + H2O = (4E,11E)-2-hydroxytrideca-4,11-dien-1,2,3-tricarboxylate + CoA + H(+). It functions in the pathway secondary metabolite biosynthesis. Functionally, alkylcitrate synthase; part of the gene cluster that mediates the biosynthesis of the antihypercholesterolemic agents phomoidrides which are dimeric anhydrides. Within the pathway, the alkylcitrate synthase (ACS) tstJ and the alkylcitrate dehydratase (ACDH) tstI produce the decarboxylated monomeric anhydrides by coupling the C12-fatty acyl product from phiA with oxalacetic acid. The pathway begins with the highly reducing polyketide synthase tstA that catalyzes the formation of a C12-fatty acyl-ACP, starting from one acetate and 5 malonate units. The hydrolase tstM is involved in the release of the C12-fatty acyl chain from phiA. The alkylcitrate synthase (ACS) tstJ and the alkylcitrate dehydratase (ACDH) tstI then give rise to decarboxylated monomeric anhydrides by coupling the C12-fatty acyl chain with oxalacetic acid. The cyclase tstC is responsible for the dimerization of the monomeric anhydrides which leads to the production of prephomoidride that contains the characteristic bicyclo[4.3.1]deca-1,6-diene system of phomoidrides. Iterative oxidation catalyzed by the alpha-ketoglutarate-dependent dioxygenase tstK produced then phomoidride A. Finally, the methyltransferase tstE converts phomoidride A to phomoidride B via an acetalization reaction. The phosphatidylethanolamine-binding protein tstB and tstN are not essential for dimerization and their functions have still to be determined. This is Alkylcitrate synthase tstJ from Talaromyces stipitatus (strain ATCC 10500 / CBS 375.48 / QM 6759 / NRRL 1006) (Penicillium stipitatum).